The following is a 463-amino-acid chain: Zinc finger protein interacting with ribonucleoprotein K (463 aa).

The KRAB domain occupies 14-89 (VTFQDVAICF…PKTNLCEKCV (76 aa)). Disordered regions lie at residues 106–128 (HSTE…KPLE) and 171–211 (KYRK…TSNG). The segment covering 174–191 (KSTEGRKETSHESDKSEE) has biased composition (basic and acidic residues). The segment covering 192 to 201 (CQSLSSQKQT) has biased composition (polar residues). 9 C2H2-type zinc fingers span residues 215–237 (YECS…QRVH), 243–265 (WECR…RRIH), 271–293 (YECS…QKTH), 299–321 (YECS…KRVH), 327–349 (YKCS…RRIH), 355–377 (YECR…QRVH), 383–405 (YKCS…RRIH), 411–433 (YECS…QVVH), and 439–461 (YECD…QKCH).

Belongs to the krueppel C2H2-type zinc-finger protein family. As to quaternary structure, interacts with HNRPK. As to expression, expressed in ovary and liver, and at lower levels in brain and muscle.

The protein localises to the nucleus. In terms of biological role, may be a transcriptional repressor. This is Zinc finger protein interacting with ribonucleoprotein K (Zik1) from Mus musculus (Mouse).